Consider the following 212-residue polypeptide: MLAILDYKAGNQTSVQRALNKLGIPNQITSDKEVLSKATGIIFPGVGAAGQAMDELTSGGLDELLKDLVQQKKPLLGICVGCQILLDYSEENDTQALSVIPGECRLFNPSWEDYEGVPIRVPHMGWNQIELKQDCILFKDIDPEAHFYFVHSYYPAPEEKYIIGETIYGRPFCSLHGREGLWAVQFHPEKSGRPGLKLLSNFYEYCKEVSDA.

One can recognise a Glutamine amidotransferase type-1 domain in the interval 1 to 212 (MLAILDYKAG…YEYCKEVSDA (212 aa)). Cys-79 acts as the Nucleophile in catalysis. Residues His-187 and Glu-189 contribute to the active site.

In terms of assembly, heterodimer of HisH and HisF.

The protein localises to the cytoplasm. It catalyses the reaction 5-[(5-phospho-1-deoxy-D-ribulos-1-ylimino)methylamino]-1-(5-phospho-beta-D-ribosyl)imidazole-4-carboxamide + L-glutamine = D-erythro-1-(imidazol-4-yl)glycerol 3-phosphate + 5-amino-1-(5-phospho-beta-D-ribosyl)imidazole-4-carboxamide + L-glutamate + H(+). It carries out the reaction L-glutamine + H2O = L-glutamate + NH4(+). It participates in amino-acid biosynthesis; L-histidine biosynthesis; L-histidine from 5-phospho-alpha-D-ribose 1-diphosphate: step 5/9. Functionally, IGPS catalyzes the conversion of PRFAR and glutamine to IGP, AICAR and glutamate. The HisH subunit catalyzes the hydrolysis of glutamine to glutamate and ammonia as part of the synthesis of IGP and AICAR. The resulting ammonia molecule is channeled to the active site of HisF. The chain is Imidazole glycerol phosphate synthase subunit HisH from Maridesulfovibrio salexigens (strain ATCC 14822 / DSM 2638 / NCIMB 8403 / VKM B-1763) (Desulfovibrio salexigens).